Here is a 105-residue protein sequence, read N- to C-terminus: Pyrimidine/purine nucleoside phosphorylase (105 aa).

Belongs to the nucleoside phosphorylase PpnP family.

It catalyses the reaction a purine D-ribonucleoside + phosphate = a purine nucleobase + alpha-D-ribose 1-phosphate. It carries out the reaction adenosine + phosphate = alpha-D-ribose 1-phosphate + adenine. The catalysed reaction is cytidine + phosphate = cytosine + alpha-D-ribose 1-phosphate. The enzyme catalyses guanosine + phosphate = alpha-D-ribose 1-phosphate + guanine. It catalyses the reaction inosine + phosphate = alpha-D-ribose 1-phosphate + hypoxanthine. It carries out the reaction thymidine + phosphate = 2-deoxy-alpha-D-ribose 1-phosphate + thymine. The catalysed reaction is uridine + phosphate = alpha-D-ribose 1-phosphate + uracil. The enzyme catalyses xanthosine + phosphate = alpha-D-ribose 1-phosphate + xanthine. Catalyzes the phosphorolysis of diverse nucleosides, yielding D-ribose 1-phosphate and the respective free bases. Can use uridine, adenosine, guanosine, cytidine, thymidine, inosine and xanthosine as substrates. Also catalyzes the reverse reactions. The sequence is that of Pyrimidine/purine nucleoside phosphorylase from Acidovorax ebreus (strain TPSY) (Diaphorobacter sp. (strain TPSY)).